A 202-amino-acid polypeptide reads, in one-letter code: Peptidyl-tRNA hydrolase (202 aa).

Tyrosine 16 contributes to the tRNA binding site. Histidine 21 functions as the Proton acceptor in the catalytic mechanism. Tyrosine 68, asparagine 70, and asparagine 116 together coordinate tRNA.

Belongs to the PTH family. Monomer.

It is found in the cytoplasm. The enzyme catalyses an N-acyl-L-alpha-aminoacyl-tRNA + H2O = an N-acyl-L-amino acid + a tRNA + H(+). Its function is as follows. Hydrolyzes ribosome-free peptidyl-tRNAs (with 1 or more amino acids incorporated), which drop off the ribosome during protein synthesis, or as a result of ribosome stalling. Functionally, catalyzes the release of premature peptidyl moieties from peptidyl-tRNA molecules trapped in stalled 50S ribosomal subunits, and thus maintains levels of free tRNAs and 50S ribosomes. This chain is Peptidyl-tRNA hydrolase, found in Treponema pallidum (strain Nichols).